The chain runs to 457 residues: Variant surface glycoprotein 20 (457 aa).

A signal peptide spans 1-20; the sequence is MFTQAVIALIGLVSIRTGKT. Residues 385–397 show a composition bias toward polar residues; the sequence is RQTASGDDQSAEN. Residues 385-406 are disordered; sequence RQTASGDDQSAENQCGGKKEDE. The N-linked (GlcNAc...) asparagine glycan is linked to Asn436. Residue Ser440 is the site of GPI-anchor amidated serine attachment. The propeptide at 441-457 is removed in mature form; that stretch reads NSFVIKKAPLWLAFLLF.

Its subcellular location is the cell membrane. Its function is as follows. VSG forms a coat on the surface of the parasite. The trypanosome evades the immune response of the host by expressing a series of antigenically distinct VSGs from an estimated 1000 VSG genes. The protein is Variant surface glycoprotein 20 of Trypanosoma equiperdum.